The primary structure comprises 105 residues: Endoribonuclease MazF1 (105 aa).

Belongs to the PemK/MazF family. As to quaternary structure, forms a complex with cognate antitoxin MazE1.

Toxic component of a type II toxin-antitoxin (TA) system. Acts as an endoribonuclease on single-strand RNA, cleaving between the first and second bases in the sequence UCGCU. Neutralized by coexpression with cognate antitoxin MazE1. The sequence is that of Endoribonuclease MazF1 (mazF1) from Mycobacterium bovis (strain ATCC BAA-935 / AF2122/97).